Here is a 200-residue protein sequence, read N- to C-terminus: Recombination protein RecR (200 aa).

The segment at 57–72 adopts a C4-type zinc-finger fold; sequence CSECRTFTEEDTCAIC. The Toprim domain occupies 81-176; sequence GELCIVESPA…SASRIAHGVP (96 aa).

Belongs to the RecR family.

May play a role in DNA repair. It seems to be involved in an RecBC-independent recombinational process of DNA repair. It may act with RecF and RecO. The sequence is that of Recombination protein RecR from Aliivibrio salmonicida (strain LFI1238) (Vibrio salmonicida (strain LFI1238)).